The sequence spans 124 residues: uncharacterized protein (124 aa).

The GIY-YIG domain occupies 42–118 (DKGGIFMFYN…INTQHSKYNI (77 aa)).

This is an uncharacterized protein from Bacillus subtilis (strain 168).